A 245-amino-acid polypeptide reads, in one-letter code: 8-amino-3,8-dideoxy-manno-octulosonate cytidylyltransferase (245 aa).

It belongs to the KdsB family.

It is found in the cytoplasm. It catalyses the reaction 8-amino-3,8-dideoxy-alpha-D-manno-octulosonate + CTP = CMP-8-amino-3,8-dideoxy-alpha-D-manno-oct-2-ulosonate + diphosphate. Its pathway is bacterial outer membrane biogenesis; lipopolysaccharide biosynthesis. In terms of biological role, activates KDO8N (a required 8-carbon sugar) for incorporation into bacterial lipopolysaccharide in the Shewanella genus. This is 8-amino-3,8-dideoxy-manno-octulosonate cytidylyltransferase from Shewanella loihica (strain ATCC BAA-1088 / PV-4).